Here is a 379-residue protein sequence, read N- to C-terminus: MQACEGSAAGRRAFDSICPNRMLDLSRRTLGKPGKPERKFVPSWKSFSGCGGGSPVAVYEDPPDAEPAPLPALTTIDLQDLADCTSLLGTEASPSGDSSASQNPSLQTEEDFNLQNFRDAMDDLIADSSSLMSPPLTNSDFPFSPCDVSSFGSCLSPSLDPPALGSPDLPPPPTEQYWKEVADQNQRALGTALIENNQLHVTLTQKQEEIASLRERNVQLKELASRTRHLASVLDKLMITQSPAEPFQIKATTKRSLEELFCAAGQAGQGCAEVDAILRDISQRCEEALHNRDPKRPRLQPEPDSKDCSSRNLHGAFRGLRTDCSASSVNLSHSELEEGGSFSTPIRSHSTIRTLAFPQGKAFTIRTVTGGYKFRWVPS.

The segment at 1–129 (MQACEGSAAG…AMDDLIADSS (129 aa)) is necessary and sufficient for its degradation during the cell cycle. Disordered stretches follow at residues 26 to 71 (SRRT…APLP) and 88 to 107 (LGTE…PSLQ). Residues 92-107 (ASPSGDSSASQNPSLQ) show a composition bias toward polar residues. The segment at 130-379 (SLMSPPLTNS…GGYKFRWVPS (250 aa)) is necessary and sufficient for proper nuclear localization. Positions 171–241 (PPPTEQYWKE…SVLDKLMITQ (71 aa)) are necessary and sufficient for interaction with GMNN and sufficient for homodimerization. The stretch at 175–223 (EQYWKEVADQNQRALGTALIENNQLHVTLTQKQEEIASLRERNVQLKEL) forms a coiled coil. A compositionally biased stretch (basic and acidic residues) spans 291 to 309 (NRDPKRPRLQPEPDSKDCS). Positions 291–312 (NRDPKRPRLQPEPDSKDCSSRN) are disordered.

The protein belongs to the geminin family. As to quaternary structure, heterodimer (via coiled-coil domain) with GMNN (via coiled-coil domain); targets GMNN to the nucleus. Can form homodimers (in vitro, via coiled-coil domain), but these are much less stable than the heterodimer formed with GMNN.

It is found in the nucleus. In terms of biological role, transcription regulator specifically required for multiciliate cell differentiation. Acts in a multiprotein complex containing E2F4 and E2F5 that binds and activates genes required for centriole biogenesis. Required for the deuterosome-mediated acentriolar pathway. Plays a role in mitotic cell cycle progression by promoting cell cycle exit. Modulates GMNN activity by reducing its affinity for CDT1. The chain is Multicilin (Mcidas) from Mus musculus (Mouse).